The following is an 87-amino-acid chain: MVNMKASMFLTFAGLVLLFVVCYAPESEEKEFPKEMLSSIFAVDNDFKQEERDCAGYMRECKEKLCCSGYVCSSRWKWCVLPAPWRR.

The first 24 residues, 1 to 24 (MVNMKASMFLTFAGLVLLFVVCYA), serve as a signal peptide directing secretion. A propeptide spanning residues 25–52 (PESEEKEFPKEMLSSIFAVDNDFKQEER) is cleaved from the precursor. 3 disulfide bridges follow: C54–C67, C61–C72, and C66–C79.

It belongs to the neurotoxin 10 (Hwtx-1) family. 51 (Hntx-8) subfamily. Hntx-8 sub-subfamily. Expressed by the venom gland.

The protein resides in the secreted. Functionally, ion channel inhibitor. The chain is U3-theraphotoxin-Hhn1a 3 from Cyriopagopus hainanus (Chinese bird spider).